A 151-amino-acid chain; its full sequence is Large ribosomal subunit protein bL9 (151 aa).

This sequence belongs to the bacterial ribosomal protein bL9 family.

Functionally, binds to the 23S rRNA. This chain is Large ribosomal subunit protein bL9, found in Mycoplasmopsis agalactiae (strain NCTC 10123 / CIP 59.7 / PG2) (Mycoplasma agalactiae).